Here is a 110-residue protein sequence, read N- to C-terminus: Large ribosomal subunit protein uL22 (110 aa).

It belongs to the universal ribosomal protein uL22 family. As to quaternary structure, part of the 50S ribosomal subunit.

This protein binds specifically to 23S rRNA; its binding is stimulated by other ribosomal proteins, e.g. L4, L17, and L20. It is important during the early stages of 50S assembly. It makes multiple contacts with different domains of the 23S rRNA in the assembled 50S subunit and ribosome. In terms of biological role, the globular domain of the protein is located near the polypeptide exit tunnel on the outside of the subunit, while an extended beta-hairpin is found that lines the wall of the exit tunnel in the center of the 70S ribosome. In Syntrophus aciditrophicus (strain SB), this protein is Large ribosomal subunit protein uL22.